The primary structure comprises 409 residues: Na(+)-translocating NADH-quinone reductase subunit F (409 aa).

The chain crosses the membrane as a helical span at residues 5–25; it reads FIFGIGAFTAIVLVLAVVILI. Residues 34–128 enclose the 2Fe-2S ferredoxin-type domain; sequence GDITISINND…SMDVELPEEV (95 aa). Cysteine 71, cysteine 77, cysteine 80, and cysteine 112 together coordinate [2Fe-2S] cluster. The FAD-binding FR-type domain maps to 131-271; it reads VKKWECTVIS…SGPFGEFFAK (141 aa).

This sequence belongs to the NqrF family. As to quaternary structure, composed of six subunits; NqrA, NqrB, NqrC, NqrD, NqrE and NqrF. [2Fe-2S] cluster is required as a cofactor. FAD serves as cofactor.

The protein resides in the cell inner membrane. The enzyme catalyses a ubiquinone + n Na(+)(in) + NADH + H(+) = a ubiquinol + n Na(+)(out) + NAD(+). In terms of biological role, NQR complex catalyzes the reduction of ubiquinone-1 to ubiquinol by two successive reactions, coupled with the transport of Na(+) ions from the cytoplasm to the periplasm. The first step is catalyzed by NqrF, which accepts electrons from NADH and reduces ubiquinone-1 to ubisemiquinone by a one-electron transfer pathway. The polypeptide is Na(+)-translocating NADH-quinone reductase subunit F (Mannheimia succiniciproducens (strain KCTC 0769BP / MBEL55E)).